Consider the following 564-residue polypeptide: Chaperonin GroEL 2 (564 aa).

ATP-binding positions include 29 to 32 (TIGP), 86 to 90 (DGTTT), glycine 413, and aspartate 493. Residues 521–541 (DKPEPPAPAGDGGGDPMGGMG) form a disordered region. Residues 530 to 541 (GDGGGDPMGGMG) are compositionally biased toward gly residues.

Belongs to the chaperonin (HSP60) family. In terms of assembly, forms a cylinder of 14 subunits composed of two heptameric rings stacked back-to-back. Interacts with the co-chaperonin GroES.

It localises to the cytoplasm. It catalyses the reaction ATP + H2O + a folded polypeptide = ADP + phosphate + an unfolded polypeptide.. Its function is as follows. Together with its co-chaperonin GroES, plays an essential role in assisting protein folding. The GroEL-GroES system forms a nano-cage that allows encapsulation of the non-native substrate proteins and provides a physical environment optimized to promote and accelerate protein folding. The polypeptide is Chaperonin GroEL 2 (Prochlorococcus marinus (strain MIT 9303)).